The primary structure comprises 104 residues: N(4)-acetylcytidine amidohydrolase (104 aa).

Positions 7-95 constitute an ASCH domain; it reads MTFFERFETD…IQDIYPGISQ (89 aa). Lys-22 acts as the Proton acceptor in catalysis. The active-site Nucleophile is Thr-25. The Proton donor role is filled by Glu-75.

This sequence belongs to the N(4)-acetylcytidine amidohydrolase family.

The catalysed reaction is N(4)-acetylcytidine + H2O = cytidine + acetate + H(+). It catalyses the reaction N(4)-acetyl-2'-deoxycytidine + H2O = 2'-deoxycytidine + acetate + H(+). The enzyme catalyses N(4)-acetylcytosine + H2O = cytosine + acetate + H(+). In terms of biological role, catalyzes the hydrolysis of N(4)-acetylcytidine (ac4C). The polypeptide is N(4)-acetylcytidine amidohydrolase (Vibrio atlanticus (strain LGP32) (Vibrio splendidus (strain Mel32))).